A 202-amino-acid chain; its full sequence is MSVNFVDSCRLPTHLGEFEMYGFVEESGQEHIMLTYGEITPDKPLLIRLHSECLTGDSLFSMRCDCGYQLETALENIVDAGQGALLYLRQEGRGIGLINKIKAYHLQDDGADTVEANEQLGFAADLRRYTMCKPMLEHFRVNKVKLLTNNPKKVQALKDLGIEVVEQMPIQVGRNQYNHEYLNTKAERMGHMMTHGLLSDLG.

48-52 (RLHSE) lines the GTP pocket. 3 residues coordinate Zn(2+): Cys53, Cys64, and Cys66. Residues Gln69, 91–93 (EGR), and Thr113 contribute to the GTP site. Residue Asp125 is the Proton acceptor of the active site. Arg127 acts as the Nucleophile in catalysis. GTP contacts are provided by Thr148 and Lys153.

Belongs to the GTP cyclohydrolase II family. It depends on Zn(2+) as a cofactor.

It catalyses the reaction GTP + 4 H2O = 2,5-diamino-6-hydroxy-4-(5-phosphoribosylamino)-pyrimidine + formate + 2 phosphate + 3 H(+). Its pathway is cofactor biosynthesis; riboflavin biosynthesis; 5-amino-6-(D-ribitylamino)uracil from GTP: step 1/4. Its function is as follows. Catalyzes the conversion of GTP to 2,5-diamino-6-ribosylamino-4(3H)-pyrimidinone 5'-phosphate (DARP), formate and pyrophosphate. This chain is GTP cyclohydrolase-2, found in Colwellia psychrerythraea (strain 34H / ATCC BAA-681) (Vibrio psychroerythus).